Here is a 223-residue protein sequence, read N- to C-terminus: Glycerol-3-phosphate acyltransferase (223 aa).

A run of 5 helical transmembrane segments spans residues 2 to 22, 52 to 72, 78 to 98, 112 to 132, and 153 to 173; these read LEIL…GLVI, WGVA…WLAF, PVFV…SCFM, IFLP…MLVI, and LAVS…AVVV. Residues 191–223 form a disordered region; that stretch reads WLKSKNKGAAAGNAAEGDDTQNMNPQDAGRKDG.

It belongs to the PlsY family. Probably interacts with PlsX.

It localises to the cell inner membrane. The catalysed reaction is an acyl phosphate + sn-glycerol 3-phosphate = a 1-acyl-sn-glycero-3-phosphate + phosphate. The protein operates within lipid metabolism; phospholipid metabolism. Its function is as follows. Catalyzes the transfer of an acyl group from acyl-phosphate (acyl-PO(4)) to glycerol-3-phosphate (G3P) to form lysophosphatidic acid (LPA). This enzyme utilizes acyl-phosphate as fatty acyl donor, but not acyl-CoA or acyl-ACP. In Desulfovibrio desulfuricans (strain ATCC 27774 / DSM 6949 / MB), this protein is Glycerol-3-phosphate acyltransferase.